The following is a 75-amino-acid chain: Metallothionein-like protein 1 (75 aa).

This sequence belongs to the metallothionein superfamily. Type 15 family.

Functionally, metallothioneins have a high content of cysteine residues that bind various heavy metals. The protein is Metallothionein-like protein 1 (ALI1) of Triticum aestivum (Wheat).